A 344-amino-acid polypeptide reads, in one-letter code: Chalcone synthase A (344 aa).

The active site involves cysteine 167.

Belongs to the thiolase-like superfamily. Chalcone/stilbene synthases family.

The catalysed reaction is (E)-4-coumaroyl-CoA + 3 malonyl-CoA + 3 H(+) = 2',4,4',6'-tetrahydroxychalcone + 3 CO2 + 4 CoA. It participates in secondary metabolite biosynthesis; flavonoid biosynthesis. The primary product of this enzyme is 4,2',4',6'-tetrahydroxychalcone (also termed naringenin-chalcone or chalcone) which can under specific conditions spontaneously isomerize into naringenin. This chain is Chalcone synthase A (CHSA), found in Ipomoea nil (Japanese morning glory).